Consider the following 338-residue polypeptide: Galaxin (338 aa).

Residues 1–23 (MKPSGAFLSLCVVLLSLATHCFS) form the signal peptide. Residues 30–47 (RRDAHSDTNALKSRDRRQ) are compositionally biased toward basic and acidic residues. Residues 30 to 50 (RRDAHSDTNALKSRDRRQAPA) form a disordered region.

In terms of tissue distribution, component of the acid-insoluble organic matrix of the aragonitic skeleton (at protein level). Initially, expressed in an aboral submarginal ring and then along calcifying septa.

Its subcellular location is the secreted. The polypeptide is Galaxin (Acropora millepora (Staghorn coral)).